The primary structure comprises 121 residues: Acidic phospholipase A2 PLA-2 (121 aa).

Cystine bridges form between C26–C115, C28–C44, C43–C95, C49–C121, C50–C88, C57–C81, and C75–C86. Ca(2+) is bound by residues Y27, G29, and G31. H47 is an active-site residue. Position 48 (D48) interacts with Ca(2+). D89 is a catalytic residue.

This sequence belongs to the phospholipase A2 family. Group II subfamily. D49 sub-subfamily. Ca(2+) is required as a cofactor. In terms of tissue distribution, expressed by the venom gland.

Its subcellular location is the secreted. It catalyses the reaction a 1,2-diacyl-sn-glycero-3-phosphocholine + H2O = a 1-acyl-sn-glycero-3-phosphocholine + a fatty acid + H(+). Functionally, PLA2 catalyzes the calcium-dependent hydrolysis of the 2-acyl groups in 3-sn-phosphoglycerides. The polypeptide is Acidic phospholipase A2 PLA-2 (Eristicophis macmahoni (Leaf-nosed viper)).